The sequence spans 670 residues: Alpha-1,4-glucan:maltose-1-phosphate maltosyltransferase (670 aa).

Alpha-maltose 1-phosphate contacts are provided by Lys262, Gln322, and Asp357. The active-site Nucleophile is the Asp393. Position 394 (Asn394) interacts with alpha-maltose 1-phosphate. Glu422 (proton donor) is an active-site residue. Lys534–Tyr535 provides a ligand contact to alpha-maltose 1-phosphate.

The protein belongs to the glycosyl hydrolase 13 family. GlgE subfamily. In terms of assembly, homodimer.

It catalyses the reaction alpha-maltose 1-phosphate + [(1-&gt;4)-alpha-D-glucosyl](n) = [(1-&gt;4)-alpha-D-glucosyl](n+2) + phosphate. Functionally, maltosyltransferase that uses maltose 1-phosphate (M1P) as the sugar donor to elongate linear or branched alpha-(1-&gt;4)-glucans. Is involved in a branched alpha-glucan biosynthetic pathway from trehalose, together with TreS, Mak and GlgB. The polypeptide is Alpha-1,4-glucan:maltose-1-phosphate maltosyltransferase (Chlorobaculum tepidum (strain ATCC 49652 / DSM 12025 / NBRC 103806 / TLS) (Chlorobium tepidum)).